A 118-amino-acid polypeptide reads, in one-letter code: BLOC-1-related complex subunit 8 (118 aa).

The segment covering 98-107 (KEQISNSQGR) has biased composition (polar residues). The tract at residues 98–118 (KEQISNSQGRSPHVSAPSASS) is disordered.

Belongs to the BORCS8 family.

It localises to the lysosome membrane. In terms of biological role, as part of a BORC-like complex, it may play a role in the movement and localization of lysosomes at the cell periphery. Associated with the cytosolic face of lysosomes, this complex may couple lysosomes to microtubule plus-end-directed kinesin motors, driving lysosome movement toward the cell periphery. The chain is BLOC-1-related complex subunit 8 from Tetraodon nigroviridis (Spotted green pufferfish).